Reading from the N-terminus, the 179-residue chain is Signal peptidase complex catalytic subunit SEC11A (179 aa).

At 1-16 the chain is on the cytoplasmic side; it reads MLSLDFLDDVRRMNKR. The chain crosses the membrane as a helical; Signal-anchor for type II membrane protein span at residues 17 to 36; sequence QLYYQVLNFGMIVSSALMIW. At 37-179 the chain is on the lumenal side; it reads KGLMLITGSE…LGLFVLVHRE (143 aa). Residues Ser56, His96, and Asp122 each act as charge relay system in the active site. Residues 165-176 form a C-terminal short (CTS) helix region; it reads AVLFLLGLFVLV.

It belongs to the peptidase S26B family. In terms of assembly, component of the signal peptidase complex paralog A (SPC-A) composed of a catalytic subunit SEC11A and three accessory subunits SPCS1, SPCS2 and SPCS3. Within the complex, interacts with SPCS2 and SPCS3. The complex induces a local thinning of the ER membrane which is used to measure the length of the signal peptide (SP) h-region of protein substrates. This ensures the selectivity of the complex towards h-regions shorter than 18-20 amino acids.

It is found in the endoplasmic reticulum membrane. The catalysed reaction is Cleavage of hydrophobic, N-terminal signal or leader sequences from secreted and periplasmic proteins.. Functionally, catalytic component of the signal peptidase complex (SPC) which catalyzes the cleavage of N-terminal signal sequences from nascent proteins as they are translocated into the lumen of the endoplasmic reticulum. Specifically cleaves N-terminal signal peptides that contain a hydrophobic alpha-helix (h-region) shorter than 18-20 amino acids. This chain is Signal peptidase complex catalytic subunit SEC11A (Sec11a), found in Rattus norvegicus (Rat).